Consider the following 248-residue polypeptide: Pyruvate formate-lyase-activating enzyme (248 aa).

Positions 17 to 248 (VDGPGIRFIV…NKILETSSYK (232 aa)) constitute a Radical SAM core domain. C31, C35, and C38 together coordinate [4Fe-4S] cluster. Residues 37 to 39 (FCH), G80, 135 to 137 (DIK), and H208 each bind S-adenosyl-L-methionine.

It belongs to the organic radical-activating enzymes family. [4Fe-4S] cluster serves as cofactor.

The protein localises to the cytoplasm. The enzyme catalyses glycyl-[formate C-acetyltransferase] + reduced [flavodoxin] + S-adenosyl-L-methionine = glycin-2-yl radical-[formate C-acetyltransferase] + semiquinone [flavodoxin] + 5'-deoxyadenosine + L-methionine + H(+). Functionally, activation of pyruvate formate-lyase under anaerobic conditions by generation of an organic free radical, using S-adenosylmethionine and reduced flavodoxin as cosubstrates to produce 5'-deoxy-adenosine. This Listeria innocua serovar 6a (strain ATCC BAA-680 / CLIP 11262) protein is Pyruvate formate-lyase-activating enzyme (pflA).